The primary structure comprises 130 residues: Large ribosomal subunit protein bL12 (130 aa).

It belongs to the bacterial ribosomal protein bL12 family. In terms of assembly, homodimer. Part of the ribosomal stalk of the 50S ribosomal subunit. Forms a multimeric L10(L12)X complex, where L10 forms an elongated spine to which 2 to 4 L12 dimers bind in a sequential fashion. Binds GTP-bound translation factors.

In terms of biological role, forms part of the ribosomal stalk which helps the ribosome interact with GTP-bound translation factors. Is thus essential for accurate translation. This is Large ribosomal subunit protein bL12 from Nostoc sp. (strain PCC 7120 / SAG 25.82 / UTEX 2576).